The primary structure comprises 444 residues: Glutamate-1-semialdehyde 2,1-aminomutase (444 aa).

Lys278 is subject to N6-(pyridoxal phosphate)lysine.

This sequence belongs to the class-III pyridoxal-phosphate-dependent aminotransferase family. HemL subfamily. Homodimer. Requires pyridoxal 5'-phosphate as cofactor.

The protein localises to the cytoplasm. The catalysed reaction is (S)-4-amino-5-oxopentanoate = 5-aminolevulinate. Its pathway is porphyrin-containing compound metabolism; protoporphyrin-IX biosynthesis; 5-aminolevulinate from L-glutamyl-tRNA(Glu): step 2/2. This chain is Glutamate-1-semialdehyde 2,1-aminomutase, found in Deinococcus radiodurans (strain ATCC 13939 / DSM 20539 / JCM 16871 / CCUG 27074 / LMG 4051 / NBRC 15346 / NCIMB 9279 / VKM B-1422 / R1).